Consider the following 293-residue polypeptide: MALVSADSRIAELLTELHQLIKQTQEERSRSEHNLVNIQKTHERMQTENKISPYYRTKLRGLYTTAKADAEAECNILRKALDKIAEIKSLLEERRIAAKIAGLYNDSEPPRKTMRRGVLMTLLQQSAMTLPLWIGKPGDKPPPLCGAIPASGDYVARPGDKVAARVKAVDGDEQWILAEVVSYSHATNKYEVDDIDEEGKERHTLSRRRVIPLPQWKANPETDPEALFQKEQLVLALYPQTTCFYRALIHAPPQRPQDDYSVLFEDTSYADGYSPPLNVAQRYVVACKEPKKK.

Residues 3–88 (LVSADSRIAE…KALDKIAEIK (86 aa)) adopt a coiled-coil conformation. An SGF29 C-terminal domain is found at 152 to 293 (GDYVARPGDK…VVACKEPKKK (142 aa)). 2 histone H3K4me3 N-terminus binding regions span residues 194–196 (DID) and 240–243 (QTTC). The segment at 264 to 266 (FED) is histone H3K4me3 binding. N6-acetyllysine is present on Lys288.

The protein belongs to the SGF29 family. Interacts with dimethylated and trimethylated 'Lys-4' of histone H3 (H3K4me2 and H3K4me3), with a preference for the trimethylated form (H3K4me3). Component of some SAGA-type complexes. Component of the ADA2A-containing complex (ATAC), composed of KAT14, KAT2A, TADA2L, TADA3L, ZZ3, MBIP, WDR5, YEATS2, CCDC101 and DR1. Interacts with (methylated) CGAS. Interacts with TADA3L, GCN5L2, SUPT3H and MYC.

Its subcellular location is the nucleus. Chromatin reader component of some histone acetyltransferase (HAT) SAGA-type complexes like the TFTC-HAT, ATAC or STAGA complexes. SGF29 specifically recognizes and binds methylated 'Lys-4' of histone H3 (H3K4me), with a preference for trimethylated form (H3K4me3). In the SAGA-type complexes, SGF29 is required to recruit complexes to H3K4me. Involved in the response to endoplasmic reticulum (ER) stress by recruiting the SAGA complex to H3K4me, thereby promoting histone H3 acetylation and cell survival. Also binds non-histone proteins that are methylated on Lys residues: specifically recognizes and binds CGAS monomethylated on 'Lys-506'. This is SAGA-associated factor 29 from Homo sapiens (Human).